Here is a 998-residue protein sequence, read N- to C-terminus: Probable protein kinase DDB_G0277539 (998 aa).

Disordered stretches follow at residues 1–34 (MDFP…DFDQ), 65–207 (CEDQ…TNEF), 265–284 (INNN…FSSS), 316–367 (SNGS…NYSS), 380–420 (ERTN…PNSI), and 435–489 (RLQS…NNNN). Residues 23-32 (YDDDDDDDDF) are compositionally biased toward acidic residues. Low complexity predominate over residues 70–139 (QQQQQQSSSP…NNNNNNNNNN (70 aa)). The segment covering 140–150 (SHHHHLRKGRR) has biased composition (basic residues). Residues 166-177 (ASLSSTKTNMFP) show a composition bias toward polar residues. Composition is skewed to low complexity over residues 184–203 (SSPS…QSQQ) and 265–274 (INNNYNNNNN). A compositionally biased stretch (polar residues) spans 316 to 328 (SNGSYNKGNTFPS). Residues 330-340 (EVKRVRPDQRA) are compositionally biased toward basic and acidic residues. Composition is skewed to low complexity over residues 393–415 (NVNN…NNNN) and 450–489 (NNNN…NNNN). One can recognise a Protein kinase domain in the interval 508-849 (FQELDLIGEG…AEQLLEHPLI (342 aa)). ATP contacts are provided by residues 514–522 (IGEGSFGHV) and Lys537. The Proton acceptor role is filled by Asp631. 2 residues coordinate Mg(2+): Asn636 and Glu677.

It belongs to the protein kinase superfamily. Ser/Thr protein kinase family. WEE1 subfamily.

The enzyme catalyses L-seryl-[protein] + ATP = O-phospho-L-seryl-[protein] + ADP + H(+). It carries out the reaction L-threonyl-[protein] + ATP = O-phospho-L-threonyl-[protein] + ADP + H(+). The protein is Probable protein kinase DDB_G0277539 of Dictyostelium discoideum (Social amoeba).